The primary structure comprises 183 residues: MSRKARDPIVLPQGVEVSLQNNEIVVKGPKGSLTQTLAPEVVVEIKDKEVFVSPAPNVVDRPSRVQGLFWALISNMVQGVSAGFEKRLEMIGVGFRAAVQGSVLDLSIGVSHPTKIPIPADIQVTVEKNTLISVKGINKQLVGEFAANIRAKRRPEPYKGKGIRYENEYVRRKAGKAAKTGKK.

The protein belongs to the universal ribosomal protein uL6 family. As to quaternary structure, part of the 50S ribosomal subunit.

Functionally, this protein binds to the 23S rRNA, and is important in its secondary structure. It is located near the subunit interface in the base of the L7/L12 stalk, and near the tRNA binding site of the peptidyltransferase center. This is Large ribosomal subunit protein uL6 from Chlamydia felis (strain Fe/C-56) (Chlamydophila felis).